We begin with the raw amino-acid sequence, 167 residues long: Probable chemoreceptor glutamine deamidase CheD (167 aa).

The protein belongs to the CheD family.

The enzyme catalyses L-glutaminyl-[protein] + H2O = L-glutamyl-[protein] + NH4(+). In terms of biological role, probably deamidates glutamine residues to glutamate on methyl-accepting chemotaxis receptors (MCPs), playing an important role in chemotaxis. The chain is Probable chemoreceptor glutamine deamidase CheD from Natronomonas pharaonis (strain ATCC 35678 / DSM 2160 / CIP 103997 / JCM 8858 / NBRC 14720 / NCIMB 2260 / Gabara) (Halobacterium pharaonis).